A 146-amino-acid polypeptide reads, in one-letter code: BCL7-like protein (146 aa).

Positions 59-146 (MAPPKIKEVK…RDAEMTSKQP (88 aa)) are disordered. Composition is skewed to polar residues over residues 75–90 (NQVP…TSVT) and 113–134 (DSNQ…TDFS). The span at 135–146 (SMRDAEMTSKQP) shows a compositional bias: basic and acidic residues.

This sequence belongs to the BCL7 family. In terms of tissue distribution, ubiquitous.

It is found in the nucleus. In terms of biological role, required for the terminal differentiation of seam cells, and the differentiation of distal tip cells important for normal somatic gonad and germ cell development. Plays a role in the Wnt signaling pathway, regulating the expression of beta-catenin homologs wrm-1, bar-1 and sys-1, and the localization of wrm-1 and the wnt signaling pathway component pop-1 during asymmetric cell division of seam cells and the Z-cell lineage of the somatic gonad, respectively. May have a pro-apoptotic role, possibly linked to the negative regulation of expression of anti-apoptotic factor ced-9. This chain is BCL7-like protein, found in Caenorhabditis elegans.